The sequence spans 317 residues: Pantothenate kinase (317 aa).

ATP is bound at residue 95 to 102 (GSVAVGKS).

It belongs to the prokaryotic pantothenate kinase family.

Its subcellular location is the cytoplasm. It carries out the reaction (R)-pantothenate + ATP = (R)-4'-phosphopantothenate + ADP + H(+). It functions in the pathway cofactor biosynthesis; coenzyme A biosynthesis; CoA from (R)-pantothenate: step 1/5. The sequence is that of Pantothenate kinase from Rhodopseudomonas palustris (strain BisB18).